Reading from the N-terminus, the 355-residue chain is Guanine nucleotide-binding protein alpha-12 subunit (355 aa).

The region spanning 28–355 (RQINLLLLGS…EQNLKTLMMQ (328 aa)) is the G-alpha domain. The G1 motif stretch occupies residues 31–44 (NLLLLGSGESGKST). GTP-binding positions include 36–43 (GSGESGKS), 176–182 (LFCRKAT), 201–205 (DVGGQ), 270–273 (NKND), and alanine 327. Mg(2+)-binding residues include serine 43 and threonine 182. Positions 174–182 (DILFCRKAT) are G2 motif. A G3 motif region spans residues 197 to 206 (FRFIDVGGQR). Residues 266–273 (ILFMNKND) form a G4 motif region. The segment at 325-330 (TTAVDT) is G5 motif.

This sequence belongs to the G-alpha family. As to quaternary structure, g proteins are composed of 3 units; alpha, beta and gamma. The alpha chain contains the guanine nucleotide binding site.

Its function is as follows. Guanine nucleotide-binding proteins (G proteins) are involved as modulators or transducers in various transmembrane signaling systems. May play a role in resistance to fungal infection in the epidermis by regulating the up-regulation of several antimicrobial peptides of the NLP and CNC families. Upstream of plc-3, tpa-1 and the p38-like pathway, required for the expression of antimicrobial peptide nlp-29 in the epidermis in response to fungal infection or physical injury. The polypeptide is Guanine nucleotide-binding protein alpha-12 subunit (gpa-12) (Caenorhabditis elegans).